We begin with the raw amino-acid sequence, 1134 residues long: Translation initiation factor IF-2 (1134 aa).

Disordered regions lie at residues 55 to 465 (AQKS…HIIG) and 491 to 524 (LARPGKPKASKKSGSKPTGALRKRKKESTRQRQR). 5 stretches are compositionally biased toward polar residues: residues 56-65 (QKSSNSSSPP), 83-105 (SPPTKSEANAKTNASLDKTSSLK), 137-147 (PSISKNNSLKV), 208-234 (QIKQSSDLINRSPKTSPKQPIQEIQTN), and 251-264 (VQSQFNQKPGNNNL). Composition is skewed to basic and acidic residues over residues 391-403 (KRGDLNKGPKKDG) and 438-450 (PDWDDAAKLEALR). Composition is skewed to basic residues over residues 495–504 (GKPKASKKSG) and 511–524 (LRKRKKESTRQRQR). One can recognise a tr-type G domain in the interval 626 to 798 (RRPPVVTVMG…ILLVTEVEDL (173 aa)). A G1 region spans residues 635 to 642 (GHVDHGKT). 635–642 (GHVDHGKT) contacts GTP. Positions 660-664 (GITQH) are G2. Residues 685–688 (DTPG) form a G3 region. GTP contacts are provided by residues 685 to 689 (DTPGH) and 739 to 742 (NKID). The tract at residues 739–742 (NKID) is G4. The tract at residues 775-777 (SAI) is G5.

Belongs to the TRAFAC class translation factor GTPase superfamily. Classic translation factor GTPase family. IF-2 subfamily.

It localises to the cytoplasm. Functionally, one of the essential components for the initiation of protein synthesis. Protects formylmethionyl-tRNA from spontaneous hydrolysis and promotes its binding to the 30S ribosomal subunits. Also involved in the hydrolysis of GTP during the formation of the 70S ribosomal complex. This Prochlorococcus marinus (strain SARG / CCMP1375 / SS120) protein is Translation initiation factor IF-2.